A 431-amino-acid chain; its full sequence is Tol-Pal system protein TolB (431 aa).

An N-terminal signal peptide occupies residues 1–24 (MMKFLTRMLSAFAVLFFAISTAQA). The interval 318–340 (QVYRMSSSGGAASPVGGRGSAQI) is disordered. The segment covering 323-332 (SSSGGAASPV) has biased composition (low complexity).

It belongs to the TolB family. The Tol-Pal system is composed of five core proteins: the inner membrane proteins TolA, TolQ and TolR, the periplasmic protein TolB and the outer membrane protein Pal. They form a network linking the inner and outer membranes and the peptidoglycan layer.

It is found in the periplasm. Functionally, part of the Tol-Pal system, which plays a role in outer membrane invagination during cell division and is important for maintaining outer membrane integrity. The protein is Tol-Pal system protein TolB of Mannheimia succiniciproducens (strain KCTC 0769BP / MBEL55E).